The chain runs to 322 residues: tRNA uridine(34) hydroxylase (322 aa).

Residues 125–219 (QDPNTIVIDA…YGKDPEVQGK (95 aa)) form the Rhodanese domain. The active-site Cysteine persulfide intermediate is the C179.

This sequence belongs to the TrhO family.

It catalyses the reaction uridine(34) in tRNA + AH2 + O2 = 5-hydroxyuridine(34) in tRNA + A + H2O. In terms of biological role, catalyzes oxygen-dependent 5-hydroxyuridine (ho5U) modification at position 34 in tRNAs. This is tRNA uridine(34) hydroxylase from Bacillus subtilis (strain 168).